Consider the following 162-residue polypeptide: RNA pyrophosphohydrolase (162 aa).

A Nudix hydrolase domain is found at 7–149 (KYRPCVGIML…KKEVYKTVIE (143 aa)). The short motif at 40-61 (GGVDDGEELEQAALRELLEEVG) is the Nudix box element.

This sequence belongs to the Nudix hydrolase family. RppH subfamily. A divalent metal cation is required as a cofactor.

Functionally, accelerates the degradation of transcripts by removing pyrophosphate from the 5'-end of triphosphorylated RNA, leading to a more labile monophosphorylated state that can stimulate subsequent ribonuclease cleavage. The chain is RNA pyrophosphohydrolase from Wolbachia sp. subsp. Drosophila simulans (strain wRi).